Reading from the N-terminus, the 945-residue chain is MSNKKADSKPQAKYPVNLLDTPFPMRGDLPKREPQWVKEWEERGIYDKIRAASQGRPKFILHDGPPYANGDIHLGHAVNKILKDIVVKSRNMAGFDAPYVPGWDCHGMPIEIQIEKQFGKSLPAAEVMSKARAYATEQIEKQKVGFKRLGVLGDWANPYKTMNFVNEAEEIRALGKIIEKGYVYRGLKPVNWCFDCGSALAEAEVEYKDRTDPTIDVMFAFAEPEKTAQAFGLPALPRADGGIVIWTTTPWTIPANQALNLHPEIVYALVDTERGLLIIAEERVEACMSDFKLTGRIIATTPGVKLANLRFHHPLASAHPGYKRTAPVYLGDYVTTDTGTGVVHSSPAYGIEDFMSCKAHGMTDSDFINPVMGDGRYIESLPLFGGLSIWDANPKIVDALNAAGSLLRSEKYTHSYMHCWRHKTPIIYRATSQWFAGMDVTPRDGGKTLRETALEGVDATAFYPSWGKQRLFSMIANRPDWTLSRQRQWGVPMAFFVHKETGELHPRTLELLEEVAKRVEQSGIEAWQSLDPRELIGDDANLYEKNRDTLDVWFDSGTTHWHVLRGSHKDQLQFPADLYLEGSDQHRGWFHSSLLTASMIDGRAPYKGLLTHGFTVDGEGRKMSKSLGNGIDPHEVANRLGAEIIRLWIASTDYSGELAISEEILKRVTEGYRRIRNTLRFLLANLSDFDFAQHAVPVDEWLEIDRYAVAFSQQLQTELLGHYEKYEFHPVVAKLQTYCSEDLGGFYLDVLKDRLYTSAADSRARRSAQTALYHLTHGLLRVLAPFLSFTAEEAWKVFQPASDTIFTETYYAYPEVAGSAALIDKWALLRDVRGNVTKALEEARTANRIGSSLQAEVTVHASGARYDALTSLGDDLKFVLITSAATVVKVDDEAQESVDVAASKYQKCERCWHYREDVGAHAEHPTLCGRCFSNLFENGEIRSAA.

The 'HIGH' region motif lies at 66–76; the sequence is PYANGDIHLGH. Glu-581 lines the L-isoleucyl-5'-AMP pocket. The 'KMSKS' region motif lies at 622–626; that stretch reads KMSKS. Lys-625 lines the ATP pocket. Zn(2+) contacts are provided by Cys-908, Cys-911, Cys-928, and Cys-931.

This sequence belongs to the class-I aminoacyl-tRNA synthetase family. IleS type 1 subfamily. Monomer. It depends on Zn(2+) as a cofactor.

It localises to the cytoplasm. It carries out the reaction tRNA(Ile) + L-isoleucine + ATP = L-isoleucyl-tRNA(Ile) + AMP + diphosphate. In terms of biological role, catalyzes the attachment of isoleucine to tRNA(Ile). As IleRS can inadvertently accommodate and process structurally similar amino acids such as valine, to avoid such errors it has two additional distinct tRNA(Ile)-dependent editing activities. One activity is designated as 'pretransfer' editing and involves the hydrolysis of activated Val-AMP. The other activity is designated 'posttransfer' editing and involves deacylation of mischarged Val-tRNA(Ile). The protein is Isoleucine--tRNA ligase of Burkholderia cenocepacia (strain ATCC BAA-245 / DSM 16553 / LMG 16656 / NCTC 13227 / J2315 / CF5610) (Burkholderia cepacia (strain J2315)).